The following is a 267-amino-acid chain: 4-hydroxy-tetrahydrodipicolinate reductase (267 aa).

Residues 9–14 (GAAGRM) and D35 contribute to the NAD(+) site. An NADP(+)-binding site is contributed by R36. NAD(+) contacts are provided by residues 99–101 (GTT) and 123–126 (APNY). The active-site Proton donor/acceptor is H156. Position 157 (H157) interacts with (S)-2,3,4,5-tetrahydrodipicolinate. Catalysis depends on K160, which acts as the Proton donor. (S)-2,3,4,5-tetrahydrodipicolinate is bound at residue 166–167 (GT).

It belongs to the DapB family.

It is found in the cytoplasm. The catalysed reaction is (S)-2,3,4,5-tetrahydrodipicolinate + NAD(+) + H2O = (2S,4S)-4-hydroxy-2,3,4,5-tetrahydrodipicolinate + NADH + H(+). It catalyses the reaction (S)-2,3,4,5-tetrahydrodipicolinate + NADP(+) + H2O = (2S,4S)-4-hydroxy-2,3,4,5-tetrahydrodipicolinate + NADPH + H(+). It participates in amino-acid biosynthesis; L-lysine biosynthesis via DAP pathway; (S)-tetrahydrodipicolinate from L-aspartate: step 4/4. In terms of biological role, catalyzes the conversion of 4-hydroxy-tetrahydrodipicolinate (HTPA) to tetrahydrodipicolinate. The sequence is that of 4-hydroxy-tetrahydrodipicolinate reductase from Alkalilimnicola ehrlichii (strain ATCC BAA-1101 / DSM 17681 / MLHE-1).